Here is a 229-residue protein sequence, read N- to C-terminus: Putative N-acetylmannosamine-6-phosphate 2-epimerase (229 aa).

Belongs to the NanE family.

The enzyme catalyses an N-acyl-D-glucosamine 6-phosphate = an N-acyl-D-mannosamine 6-phosphate. Its pathway is amino-sugar metabolism; N-acetylneuraminate degradation; D-fructose 6-phosphate from N-acetylneuraminate: step 3/5. Converts N-acetylmannosamine-6-phosphate (ManNAc-6-P) to N-acetylglucosamine-6-phosphate (GlcNAc-6-P). This chain is Putative N-acetylmannosamine-6-phosphate 2-epimerase, found in Actinobacillus pleuropneumoniae serotype 5b (strain L20).